A 236-amino-acid chain; its full sequence is MEKETLLYEGKAKKLYFTDDSNVLWVEYCDQATALNGARKEQITGKGALNNQITSLIFEKLNAEGLETHFIKKLSKTEQLNKKVSIIPLEVVLRNVVAGSFAKRFGLEEGIVLEEPIVEFYYKDDALDDPFINDEHVKFLNIASDSEIEFLKKETRKINKILKKIWTEIGLTLVDFKLEFGRLADGSIILADEISPDTSRLWDAKGQHMDKDVFRRNIGDLIETYTEVLNLLEKTK.

Belongs to the SAICAR synthetase family.

The catalysed reaction is 5-amino-1-(5-phospho-D-ribosyl)imidazole-4-carboxylate + L-aspartate + ATP = (2S)-2-[5-amino-1-(5-phospho-beta-D-ribosyl)imidazole-4-carboxamido]succinate + ADP + phosphate + 2 H(+). Its pathway is purine metabolism; IMP biosynthesis via de novo pathway; 5-amino-1-(5-phospho-D-ribosyl)imidazole-4-carboxamide from 5-amino-1-(5-phospho-D-ribosyl)imidazole-4-carboxylate: step 1/2. This chain is Phosphoribosylaminoimidazole-succinocarboxamide synthase (purC), found in Lactococcus lactis subsp. cremoris (Streptococcus cremoris).